We begin with the raw amino-acid sequence, 298 residues long: Cytosolic Fe-S cluster assembly factor CFD1 (298 aa).

25–32 (GKGGVGKS) contacts ATP. Positions 215 and 218 each coordinate [4Fe-4S] cluster.

The protein belongs to the Mrp/NBP35 ATP-binding proteins family. NUBP2/CFD1 subfamily. Heterotetramer of 2 NBP35 and 2 CFD1 chains. Requires [4Fe-4S] cluster as cofactor.

The protein resides in the cytoplasm. Component of the cytosolic iron-sulfur (Fe/S) protein assembly (CIA) machinery. Required for maturation of extramitochondrial Fe-S proteins. The NBP35-CFD1 heterotetramer forms a Fe-S scaffold complex, mediating the de novo assembly of an Fe-S cluster and its transfer to target apoproteins. Required for biogenesis and export of both ribosomal subunits, which may reflect a role in assembly of the Fe/S clusters in RLI1, a protein which performs rRNA processing and ribosome export. The chain is Cytosolic Fe-S cluster assembly factor CFD1 from Debaryomyces hansenii (strain ATCC 36239 / CBS 767 / BCRC 21394 / JCM 1990 / NBRC 0083 / IGC 2968) (Yeast).